The sequence spans 481 residues: Surface lipoprotein assembly modifier 2 (481 aa).

Positions 1-24 (MKNGVKQLFLLSLIGLSLTNVAWA) are cleaved as a signal peptide. The segment at 24 to 192 (AEVARPKNDT…QYLLTLNQRN (169 aa)) is N-terminal domain. The C-terminal probable beta barrel stretch occupies residues 193-481 (QWIWQVGLNF…RIYLEIGKIF (289 aa)). A run of 14 beta stranded transmembrane segments spans residues 194 to 204 (WIWQVGLNFLN), 223 to 243 (AWEK…KKWP), 248 to 257 (FFSKTMFNGN), 271 to 281 (TVRIGGGLGYQ), 285 to 295 (VEVSLFPFQEK), 315 to 325 (LGIRLENVDWL), 329 to 339 (WQISTALEYGE), 353 to 363 (YFVSSTLFYLP), 368 to 377 (FWFVGMDFHR), 390 to 399 (KTLRLGWGQD), 404 to 414 (ISSRLTFSYAN), 432 to 441 (YTTTITLWHR), 448 to 458 (LTPKLSWDYQK), and 471 to 481 (NRIYLEIGKIF).

The protein belongs to the Slam family.

It localises to the cell outer membrane. Functionally, required for correct export to the cell surface of some cell outer membrane lipoproteins. The sequence is that of Surface lipoprotein assembly modifier 2 from Haemophilus influenzae (strain ATCC 51907 / DSM 11121 / KW20 / Rd).